We begin with the raw amino-acid sequence, 466 residues long: Methylenetetrahydrofolate--tRNA-(uracil-5-)-methyltransferase TrmFO (466 aa).

Residue 14–19 (GGGLAG) participates in FAD binding.

This sequence belongs to the MnmG family. TrmFO subfamily. Requires FAD as cofactor.

It is found in the cytoplasm. The enzyme catalyses uridine(54) in tRNA + (6R)-5,10-methylene-5,6,7,8-tetrahydrofolate + NADH + H(+) = 5-methyluridine(54) in tRNA + (6S)-5,6,7,8-tetrahydrofolate + NAD(+). The catalysed reaction is uridine(54) in tRNA + (6R)-5,10-methylene-5,6,7,8-tetrahydrofolate + NADPH + H(+) = 5-methyluridine(54) in tRNA + (6S)-5,6,7,8-tetrahydrofolate + NADP(+). Its function is as follows. Catalyzes the folate-dependent formation of 5-methyl-uridine at position 54 (M-5-U54) in all tRNAs. This Brucella melitensis biotype 1 (strain ATCC 23456 / CCUG 17765 / NCTC 10094 / 16M) protein is Methylenetetrahydrofolate--tRNA-(uracil-5-)-methyltransferase TrmFO.